The following is a 540-amino-acid chain: Homoserine O-acetyltransferase (540 aa).

An AB hydrolase-1 domain is found at 66 to 404; that stretch reads NVILICHALT…QHGHDAFLLE (339 aa). Ser-171 acts as the Nucleophile in catalysis. A substrate-binding site is contributed by Arg-240. The disordered stretch occupies residues 262–284; that stretch reads QDTDKSGIKGTTGTEGKNSSEIS. Active-site residues include Asp-365 and His-398. Asp-399 lines the substrate pocket. CBS domains lie at 425 to 484 and 486 to 540; these read MNRN…ELDE and ITRD…GKYD.

This sequence belongs to the AB hydrolase superfamily. MetX family. In terms of assembly, homodimer.

It is found in the cytoplasm. It catalyses the reaction L-homoserine + acetyl-CoA = O-acetyl-L-homoserine + CoA. It participates in amino-acid biosynthesis; L-methionine biosynthesis via de novo pathway; O-acetyl-L-homoserine from L-homoserine: step 1/1. Its function is as follows. Transfers an acetyl group from acetyl-CoA to L-homoserine, forming acetyl-L-homoserine. In vitro, can also use propionyl-CoA or butiryl-CoA as acyl donor. This is Homoserine O-acetyltransferase from Methanosarcina acetivorans (strain ATCC 35395 / DSM 2834 / JCM 12185 / C2A).